The following is a 330-amino-acid chain: Zinc finger protein sdz-12 (330 aa).

C2H2-type zinc fingers lie at residues 27–48 (PQCQVCKRKFANQKTLRTHMKH), 63–85 (FRCENCEKQFTNKPNLKRHQITH), 91–113 (KKCSTCQRTFFREDQLQRHLHNH), 120–144 (FDCPVLNCSMQFVFYEGVENHLVNH), and 153–176 (APCGKCHKLFGSPRHLLVHYHFDH). The segment covering 183–195 (SAPAPTSSARLSP) has biased composition (low complexity). Residues 183–203 (SAPAPTSSARLSPITVSTSGS) are disordered. Residues 271–293 (FECKHCTIKFHDATMSIMHNALH) form a C2H2-type 6 zinc finger.

It belongs to the krueppel C2H2-type zinc-finger protein family. As to expression, expressed in the somatic gonad.

Together with ehn-3, may play a role in gonadogenesis. In Caenorhabditis elegans, this protein is Zinc finger protein sdz-12.